Here is a 100-residue protein sequence, read N- to C-terminus: Large ribosomal subunit protein uL23 (100 aa).

This sequence belongs to the universal ribosomal protein uL23 family. As to quaternary structure, part of the 50S ribosomal subunit. Contacts protein L29, and trigger factor when it is bound to the ribosome.

In terms of biological role, one of the early assembly proteins it binds 23S rRNA. One of the proteins that surrounds the polypeptide exit tunnel on the outside of the ribosome. Forms the main docking site for trigger factor binding to the ribosome. The sequence is that of Large ribosomal subunit protein uL23 from Xylella fastidiosa (strain M23).